Reading from the N-terminus, the 243-residue chain is DNA repair protein RecO (243 aa).

It belongs to the RecO family.

Its function is as follows. Involved in DNA repair and RecF pathway recombination. This is DNA repair protein RecO from Caulobacter sp. (strain K31).